The chain runs to 508 residues: MTEPTQPQAAVAADENQIVAERRGKLRALRDQGIAYPNDFQPTHHAAGLQTEYADADKEALDAKALDVAVAGRMMLKRVMGKASFATVQDGSGQIQFFVTPADVGAETYDAFKKWDLGDIVAARGVLFRTNKGELSVKCTELRLLAKALRPLPDKFHGLADQETRYRQRYVDLIVTPETRATFRARTKAIASIRKFMSDADFMEVETPMLHPIPGGAAAKPFVTHHNALDMQMFLRIAPELYLKRLIVGGFERVFEINRNFRNEGVSPRHNPEFTMMEFYAAYTDYRWLMDFTERLIRQAAVDALGTATIRYQGRELDLAKPFHRLTITQAIQKYAPNYTDGQLSDDAFLRGELKRLGVDVTQPAFLNAGIGALQLALFEETAEAQLWEPTFIIDYPIEVSPLARESDTVAGITERFELFVTGREIANGFSELNDPEDQAARFRKQVEQKDAGDEEAMFFDADYIRALEYGMPPTGGCGIGIDRLVMLLTDSPTIRDVLLFPHLRRED.

Positions 418 and 425 each coordinate Mg(2+).

This sequence belongs to the class-II aminoacyl-tRNA synthetase family. In terms of assembly, homodimer. Mg(2+) serves as cofactor.

The protein resides in the cytoplasm. The enzyme catalyses tRNA(Lys) + L-lysine + ATP = L-lysyl-tRNA(Lys) + AMP + diphosphate. In Burkholderia pseudomallei (strain K96243), this protein is Lysine--tRNA ligase.